Here is a 248-residue protein sequence, read N- to C-terminus: uncharacterized protein (248 aa).

Position 9-33 (9-33 (IITGASSGIGKATALLLAEKGAKLV)) interacts with NADP(+). Serine 141 is a substrate binding site. The active-site Proton acceptor is tyrosine 154.

Belongs to the short-chain dehydrogenases/reductases (SDR) family.

This is an uncharacterized protein from Listeria monocytogenes serovar 1/2a (strain ATCC BAA-679 / EGD-e).